Here is a 176-residue protein sequence, read N- to C-terminus: Tubulin polymerization-promoting protein family member 3 (176 aa).

A2 carries the N-acetylalanine modification.

This sequence belongs to the TPPP family.

It localises to the cytoplasm. Its subcellular location is the cytoskeleton. Functionally, regulator of microtubule dynamic that has microtubule bundling activity. Required for embryo implantation; possibly by regulating beta-catenin. Also required for decidualization via regulation of beta-catenin. The sequence is that of Tubulin polymerization-promoting protein family member 3 (Tppp3) from Rattus norvegicus (Rat).